A 513-amino-acid polypeptide reads, in one-letter code: Bifunctional pantoate ligase/cytidylate kinase (513 aa).

The interval 1–282 (MGTFHRLTTT…VGQTRLIDNC (282 aa)) is pantoate--beta-alanine ligase. 32 to 39 (MGALHGGH) is an ATP binding site. His39 acts as the Proton donor in catalysis. Gln63 provides a ligand contact to (R)-pantoate. Gln63 lines the beta-alanine pocket. 152–155 (GQKD) is a binding site for ATP. Gln158 serves as a coordination point for (R)-pantoate. ATP is bound by residues Val181 and 189–192 (LSSR). Residues 283–513 (LLDRRRPILA…HLYRSRFPQP (231 aa)) form a cytidylate kinase region.

In the N-terminal section; belongs to the pantothenate synthetase family. This sequence in the C-terminal section; belongs to the cytidylate kinase family. Type 1 subfamily.

It localises to the cytoplasm. It catalyses the reaction (R)-pantoate + beta-alanine + ATP = (R)-pantothenate + AMP + diphosphate + H(+). The catalysed reaction is CMP + ATP = CDP + ADP. It carries out the reaction dCMP + ATP = dCDP + ADP. The protein operates within cofactor biosynthesis; (R)-pantothenate biosynthesis; (R)-pantothenate from (R)-pantoate and beta-alanine: step 1/1. In terms of biological role, catalyzes the condensation of pantoate with beta-alanine in an ATP-dependent reaction via a pantoyl-adenylate intermediate. Functionally, catalyzes the transfer of a phosphate group from ATP to either CMP or dCMP to form CDP or dCDP and ADP, respectively. The sequence is that of Bifunctional pantoate ligase/cytidylate kinase from Thermosynechococcus vestitus (strain NIES-2133 / IAM M-273 / BP-1).